The following is a 323-amino-acid chain: tRNA (guanine(9)-N1)-methyltransferase (323 aa).

The segment covering 1–16 (MTEQTSEATVVNNSPA) has biased composition (polar residues). Disordered stretches follow at residues 1–34 (MTEQ…EIEE) and 192–215 (TGAP…NSTD). A compositionally biased stretch (basic and acidic residues) spans 25 to 34 (EKPTPEEIEE). The SAM-dependent MTase TRM10-type domain maps to 99-319 (KAQPIPSRQI…KVLPPRKIKS (221 aa)). The segment covering 204 to 215 (GNSNSNTTNSTD) has biased composition (low complexity). Residues 225–226 (LT), G245, 249–253 (DKNRH), C257, L271, and 283–285 (HVL) each bind S-adenosyl-L-methionine. Residue D249 is the Proton acceptor of the active site.

Belongs to the class IV-like SAM-binding methyltransferase superfamily. TRM10 family. In terms of assembly, monomer.

It is found in the cytoplasm. The protein localises to the nucleus. It catalyses the reaction guanosine(9) in tRNA + S-adenosyl-L-methionine = N(1)-methylguanosine(9) in tRNA + S-adenosyl-L-homocysteine + H(+). S-adenosyl-L-methionine-dependent guanine N(1)-methyltransferase that catalyzes the formation of N(1)-methylguanine at position 9 (m1G9) in cytoplasmic tRNA. This is tRNA (guanine(9)-N1)-methyltransferase from Candida albicans (strain SC5314 / ATCC MYA-2876) (Yeast).